The following is a 117-amino-acid chain: Hydrogenase maturation factor HypA (117 aa).

Position 2 (His2) interacts with Ni(2+). Residues Cys73, Cys76, Cys89, and Cys92 each contribute to the Zn(2+) site.

This sequence belongs to the HypA/HybF family.

Its function is as follows. Involved in the maturation of [NiFe] hydrogenases. Required for nickel insertion into the metal center of the hydrogenase. This is Hydrogenase maturation factor HypA from Shewanella baltica (strain OS185).